Reading from the N-terminus, the 247-residue chain is LHFPL tetraspan subfamily member 4 protein (247 aa).

The next 4 helical transmembrane spans lie at 22-42, 97-117, 127-147, and 178-198; these read IGVL…VVFI, FFVL…ALFF, ICAW…MIFP, and ILAI…FVLG.

The protein belongs to the LHFP family. As to quaternary structure, interacts with GABA(A) receptor subunits. Interacts with GABRB3. Interacts with GABRA2. Interacts with GABRG2. Interacts with GABRA1. Identified in a complex of 720 kDa composed of LHFPL4, NLGN2, GABRA1, GABRB2, GABRG2 and GABRB3. Interacts with NLGN2; leading to mutual regulation of protein level and synaptic clustering. In terms of tissue distribution, highly expressed in the brain, including the cortex, hippocampus, midbrain, olfactory bulb pona plus medulla (at protein level). Expressed in the in the cerebellar granular layer and in granular layer. Colocalized with GPHN at inhibitory synapses. Weakly expressed in heart, testis, lung, intestine, vagina, ovary and uterus.

Its subcellular location is the cell projection. It is found in the dendrite. The protein localises to the postsynaptic cell membrane. Plays a role in the regulation of inhibitory synapse formation and function by being involved in maintening gamma-aminobutyric acid receptors (GABAARs) clustering and their associated scaffold proteins at inhibitory synaptic sites. Acts in concert with NLGN2 to recruit or stabilize GABAARs. The sequence is that of LHFPL tetraspan subfamily member 4 protein from Mus musculus (Mouse).